The following is a 376-amino-acid chain: Erythronate-4-phosphate dehydrogenase (376 aa).

Substrate is bound by residues Ser45 and Thr67. Asp147 contacts NAD(+). Arg209 is an active-site residue. Position 233 (Asp233) interacts with NAD(+). Glu238 is an active-site residue. His255 acts as the Proton donor in catalysis. Gly258 contributes to the NAD(+) binding site. Position 259 (Tyr259) interacts with substrate.

The protein belongs to the D-isomer specific 2-hydroxyacid dehydrogenase family. PdxB subfamily. Homodimer.

Its subcellular location is the cytoplasm. It carries out the reaction 4-phospho-D-erythronate + NAD(+) = (R)-3-hydroxy-2-oxo-4-phosphooxybutanoate + NADH + H(+). Its pathway is cofactor biosynthesis; pyridoxine 5'-phosphate biosynthesis; pyridoxine 5'-phosphate from D-erythrose 4-phosphate: step 2/5. Its function is as follows. Catalyzes the oxidation of erythronate-4-phosphate to 3-hydroxy-2-oxo-4-phosphonooxybutanoate. The chain is Erythronate-4-phosphate dehydrogenase from Shewanella loihica (strain ATCC BAA-1088 / PV-4).